Consider the following 417-residue polypeptide: Gamma-glutamyl phosphate reductase (417 aa).

The protein belongs to the gamma-glutamyl phosphate reductase family.

The protein resides in the cytoplasm. The catalysed reaction is L-glutamate 5-semialdehyde + phosphate + NADP(+) = L-glutamyl 5-phosphate + NADPH + H(+). The protein operates within amino-acid biosynthesis; L-proline biosynthesis; L-glutamate 5-semialdehyde from L-glutamate: step 2/2. Catalyzes the NADPH-dependent reduction of L-glutamate 5-phosphate into L-glutamate 5-semialdehyde and phosphate. The product spontaneously undergoes cyclization to form 1-pyrroline-5-carboxylate. The polypeptide is Gamma-glutamyl phosphate reductase (Escherichia coli (strain 55989 / EAEC)).